Consider the following 186-residue polypeptide: MKMIVGLGNIGTRYDETRHNTGFMVVDQLARDYHLGAFTHLKQEAVAVSGVINGEKVMLVKPTTFMNDSGRAVGPLVDYYDIDLDDLVIVNDDLDMPVGKVRLKTHGASGGHNGLKSIISVLGTKNFNRVKVGIDHPQHGTVVSHVLGKFSKEERPKFDQAVEQAEHALEDWINGEDFAKLMNAYN.

Tyr-14 is a tRNA binding site. The active-site Proton acceptor is the His-19. The tRNA site is built by Phe-65, Asn-67, and Asn-113.

It belongs to the PTH family. As to quaternary structure, monomer.

The protein localises to the cytoplasm. It catalyses the reaction an N-acyl-L-alpha-aminoacyl-tRNA + H2O = an N-acyl-L-amino acid + a tRNA + H(+). Its function is as follows. Hydrolyzes ribosome-free peptidyl-tRNAs (with 1 or more amino acids incorporated), which drop off the ribosome during protein synthesis, or as a result of ribosome stalling. Catalyzes the release of premature peptidyl moieties from peptidyl-tRNA molecules trapped in stalled 50S ribosomal subunits, and thus maintains levels of free tRNAs and 50S ribosomes. This Limosilactobacillus reuteri (strain DSM 20016) (Lactobacillus reuteri) protein is Peptidyl-tRNA hydrolase.